A 129-amino-acid polypeptide reads, in one-letter code: Larval/pupal rigid cuticle protein 66 (129 aa).

The first 17 residues, 1–17, serve as a signal peptide directing secretion; the sequence is MLVKFVACFVFVAVASA. Residues 18 to 90 form the Chitin-binding type R&amp;R domain; the sequence is SDFSSFSYGV…ALIAAAPYIT (73 aa).

In terms of tissue distribution, expressed in larval wing disc, forewing disc, diapausing wing, adult wing, and in very low amounts in fat body and testes.

Functionally, component of the rigid cuticle of the larva and pupa of Hyalophora cecropia. This chain is Larval/pupal rigid cuticle protein 66 (CP66), found in Hyalophora cecropia (Cecropia moth).